The chain runs to 172 residues: Nascent polypeptide-associated complex subunit beta (172 aa).

Disordered regions lie at residues 36–58 (KTGKGTPRRKMKRAPARSGGDDK) and 142–172 (QNMQKADGDKEADDDDIPDLVAGENFEDKVE). Residues 41 to 50 (TPRRKMKRAP) are compositionally biased toward basic residues. An NAC-A/B domain is found at 54 to 119 (GGDDKKLQQT…GEDKELTELV (66 aa)).

This sequence belongs to the NAC-beta family. In terms of assembly, part of the nascent polypeptide-associated complex (NAC), consisting of EGD2 and EGD1. NAC associates with ribosomes via EGD1.

It is found in the cytoplasm. The protein resides in the nucleus. Component of the nascent polypeptide-associated complex (NAC), a dynamic component of the ribosomal exit tunnel, protecting the emerging polypeptides from interaction with other cytoplasmic proteins to ensure appropriate nascent protein targeting. The NAC complex also promotes mitochondrial protein import by enhancing productive ribosome interactions with the outer mitochondrial membrane and blocks the inappropriate interaction of ribosomes translating non-secretory nascent polypeptides with translocation sites in the membrane of the endoplasmic reticulum. EGD1 may act as a transcription factor that exert a negative effect on the expression of several genes that are transcribed by RNA polymerase II. In Pyricularia oryzae (strain 70-15 / ATCC MYA-4617 / FGSC 8958) (Rice blast fungus), this protein is Nascent polypeptide-associated complex subunit beta (EGD1).